The following is a 487-amino-acid chain: NADH-quinone oxidoreductase subunit N (487 aa).

14 consecutive transmembrane segments (helical) span residues 8-28 (LLALLPLLLTTGAMVALMLAI), 37-57 (AFVVTIAGLNLALFSLPIVMA), 71-91 (GYAVFYMGLVLIGALATCTFG), 104-124 (EFYLLLLIATAGGLVLAGSRH), 125-145 (LASLFIGIEMLTLPMFGLVGY), 159-179 (YMVLSAAATAFLLFGMALLYA), 203-223 (LMGGLGLMLVGFAFKLSLAPF), 235-255 (PAPVATFLATVSKIAVFCVLL), 269-289 (IHWLLAAMAVISIVIGNLLAL), 303-323 (ISHFGYLLAVIVASRLGQMPV), 327-347 (GVYLLMYLFTSLGAFGVISMM), 374-394 (AVLTVMMLSLAGIPMTLGFIG), 408-427 (WWLSGAIVLGSALGLYYYLR), and 449-469 (AITSGGLVVLLSAALVVALGL).

It belongs to the complex I subunit 2 family. In terms of assembly, NDH-1 is composed of 14 different subunits. Subunits NuoA, H, J, K, L, M, N constitute the membrane sector of the complex.

The protein localises to the cell inner membrane. It catalyses the reaction a quinone + NADH + 5 H(+)(in) = a quinol + NAD(+) + 4 H(+)(out). Its function is as follows. NDH-1 shuttles electrons from NADH, via FMN and iron-sulfur (Fe-S) centers, to quinones in the respiratory chain. The immediate electron acceptor for the enzyme in this species is believed to be ubiquinone. Couples the redox reaction to proton translocation (for every two electrons transferred, four hydrogen ions are translocated across the cytoplasmic membrane), and thus conserves the redox energy in a proton gradient. This chain is NADH-quinone oxidoreductase subunit N, found in Aeromonas hydrophila subsp. hydrophila (strain ATCC 7966 / DSM 30187 / BCRC 13018 / CCUG 14551 / JCM 1027 / KCTC 2358 / NCIMB 9240 / NCTC 8049).